Consider the following 380-residue polypeptide: Probable dual-specificity RNA methyltransferase RlmN (380 aa).

Residue E123 is the Proton acceptor of the active site. Positions H129–D362 constitute a Radical SAM core domain. Residues C136 and C367 are joined by a disulfide bond. Positions 143, 147, and 150 each coordinate [4Fe-4S] cluster. Residues G193 to E194, S225, S248 to H250, and N324 contribute to the S-adenosyl-L-methionine site. Residue C367 is the S-methylcysteine intermediate of the active site.

Belongs to the radical SAM superfamily. RlmN family. It depends on [4Fe-4S] cluster as a cofactor.

The protein resides in the cytoplasm. The enzyme catalyses adenosine(2503) in 23S rRNA + 2 reduced [2Fe-2S]-[ferredoxin] + 2 S-adenosyl-L-methionine = 2-methyladenosine(2503) in 23S rRNA + 5'-deoxyadenosine + L-methionine + 2 oxidized [2Fe-2S]-[ferredoxin] + S-adenosyl-L-homocysteine. The catalysed reaction is adenosine(37) in tRNA + 2 reduced [2Fe-2S]-[ferredoxin] + 2 S-adenosyl-L-methionine = 2-methyladenosine(37) in tRNA + 5'-deoxyadenosine + L-methionine + 2 oxidized [2Fe-2S]-[ferredoxin] + S-adenosyl-L-homocysteine. Its function is as follows. Specifically methylates position 2 of adenine 2503 in 23S rRNA and position 2 of adenine 37 in tRNAs. In Lysinibacillus sphaericus (strain C3-41), this protein is Probable dual-specificity RNA methyltransferase RlmN.